The chain runs to 120 residues: Ribosome-binding factor A (120 aa).

This sequence belongs to the RbfA family. As to quaternary structure, monomer. Binds 30S ribosomal subunits, but not 50S ribosomal subunits or 70S ribosomes.

It is found in the cytoplasm. In terms of biological role, one of several proteins that assist in the late maturation steps of the functional core of the 30S ribosomal subunit. Associates with free 30S ribosomal subunits (but not with 30S subunits that are part of 70S ribosomes or polysomes). Required for efficient processing of 16S rRNA. May interact with the 5'-terminal helix region of 16S rRNA. This is Ribosome-binding factor A from Rickettsia africae (strain ESF-5).